A 199-amino-acid chain; its full sequence is Elongation factor Ts (199 aa).

An involved in Mg(2+) ion dislocation from EF-Tu region spans residues 82-85 (TDFV).

The protein belongs to the EF-Ts family.

Its subcellular location is the cytoplasm. Associates with the EF-Tu.GDP complex and induces the exchange of GDP to GTP. It remains bound to the aminoacyl-tRNA.EF-Tu.GTP complex up to the GTP hydrolysis stage on the ribosome. This is Elongation factor Ts from Leptospira interrogans serogroup Icterohaemorrhagiae serovar Lai (strain 56601).